The primary structure comprises 204 residues: Holliday junction branch migration complex subunit RuvA (204 aa).

Residues 1–64 form a domain I region; that stretch reads MIGRLQGILL…EDAHLLFGFA (64 aa). Residues 65 to 143 form a domain II region; the sequence is QKTDRTLFRE…GVKQSDFFVE (79 aa). The interval 144 to 155 is flexible linker; it reads STHIPLSPSIES. Residues 156-204 form a domain III region; sequence HSESSSDEAISALIALGYKPVEAEKMVKRVAKPELTSEQVIREALKVAL.

The protein belongs to the RuvA family. Homotetramer. Forms an RuvA(8)-RuvB(12)-Holliday junction (HJ) complex. HJ DNA is sandwiched between 2 RuvA tetramers; dsDNA enters through RuvA and exits via RuvB. An RuvB hexamer assembles on each DNA strand where it exits the tetramer. Each RuvB hexamer is contacted by two RuvA subunits (via domain III) on 2 adjacent RuvB subunits; this complex drives branch migration. In the full resolvosome a probable DNA-RuvA(4)-RuvB(12)-RuvC(2) complex forms which resolves the HJ.

It is found in the cytoplasm. Functionally, the RuvA-RuvB-RuvC complex processes Holliday junction (HJ) DNA during genetic recombination and DNA repair, while the RuvA-RuvB complex plays an important role in the rescue of blocked DNA replication forks via replication fork reversal (RFR). RuvA specifically binds to HJ cruciform DNA, conferring on it an open structure. The RuvB hexamer acts as an ATP-dependent pump, pulling dsDNA into and through the RuvAB complex. HJ branch migration allows RuvC to scan DNA until it finds its consensus sequence, where it cleaves and resolves the cruciform DNA. The sequence is that of Holliday junction branch migration complex subunit RuvA from Haemophilus influenzae (strain ATCC 51907 / DSM 11121 / KW20 / Rd).